Consider the following 365-residue polypeptide: Chorismate synthase (365 aa).

2 residues coordinate NADP(+): Arg48 and Arg54. Residues Arg125 to Ser127, Asn237 to Ala238, Gly277, Lys292 to Ser296, and Arg318 contribute to the FMN site.

It belongs to the chorismate synthase family. Homotetramer. FMNH2 serves as cofactor.

It carries out the reaction 5-O-(1-carboxyvinyl)-3-phosphoshikimate = chorismate + phosphate. Its pathway is metabolic intermediate biosynthesis; chorismate biosynthesis; chorismate from D-erythrose 4-phosphate and phosphoenolpyruvate: step 7/7. Its function is as follows. Catalyzes the anti-1,4-elimination of the C-3 phosphate and the C-6 proR hydrogen from 5-enolpyruvylshikimate-3-phosphate (EPSP) to yield chorismate, which is the branch point compound that serves as the starting substrate for the three terminal pathways of aromatic amino acid biosynthesis. This reaction introduces a second double bond into the aromatic ring system. This is Chorismate synthase from Paracidovorax citrulli (strain AAC00-1) (Acidovorax citrulli).